We begin with the raw amino-acid sequence, 255 residues long: 1-(5-phosphoribosyl)-5-[(5-phosphoribosylamino)methylideneamino] imidazole-4-carboxamide isomerase (255 aa).

Residue aspartate 8 is the Proton acceptor of the active site. Catalysis depends on aspartate 129, which acts as the Proton donor.

Belongs to the HisA/HisF family.

It is found in the cytoplasm. It catalyses the reaction 1-(5-phospho-beta-D-ribosyl)-5-[(5-phospho-beta-D-ribosylamino)methylideneamino]imidazole-4-carboxamide = 5-[(5-phospho-1-deoxy-D-ribulos-1-ylimino)methylamino]-1-(5-phospho-beta-D-ribosyl)imidazole-4-carboxamide. Its pathway is amino-acid biosynthesis; L-histidine biosynthesis; L-histidine from 5-phospho-alpha-D-ribose 1-diphosphate: step 4/9. This Prochlorococcus marinus (strain MIT 9211) protein is 1-(5-phosphoribosyl)-5-[(5-phosphoribosylamino)methylideneamino] imidazole-4-carboxamide isomerase.